Consider the following 59-residue polypeptide: Potassium channel toxin alpha-KTx 1.1 (59 aa).

The first 22 residues, methionine 1–alanine 22, serve as a signal peptide directing secretion. Residue glutamine 23 is modified to Pyrrolidone carboxylic acid. 3 cysteine pairs are disulfide-bonded: cysteine 29-cysteine 50, cysteine 35-cysteine 55, and cysteine 39-cysteine 57. The interaction with Ca(2+)-activated K(+) channels stretch occupies residues glycine 48 to cysteine 55.

The protein belongs to the short scorpion toxin superfamily. Potassium channel inhibitor family. Alpha-KTx 01 subfamily. Expressed by the venom gland.

It is found in the secreted. This toxin inhibits numerous potassium channels: shaker (Ki=227 nM), Kv1.2/KCNA2 (nanomolar range), Kv1.3/KCNA3 (nanomolar range), Kv1.5/KCNA5 (Kd&gt;100 nM), Kv1.6/KCNA6 (Ki=22 nM), KCa1.1/KCNMA1 (IC(50)=5.9 nM). It blocks channel activity by a simple bimolecular inhibition process. It also shows a weak interaction with nicotinic acetylcholine receptors (nAChR), suggesting it may weakly inhibit it. It also exhibits pH-specific antimicrobial activities against bacteria (B.subtilis, E.coli and S.aureus) and the fungus C.albicans. This chain is Potassium channel toxin alpha-KTx 1.1, found in Leiurus hebraeus (Hebrew deathstalker scorpion).